A 165-amino-acid polypeptide reads, in one-letter code: Neuritin-like protein (165 aa).

The first 35 residues, 1 to 35, serve as a signal peptide directing secretion; the sequence is MMRCCRRRCCCRQPPHALRPLLLLPLVLLPPLAAA. Ala-139 carries GPI-anchor amidated alanine lipidation. Residues 140–165 constitute a propeptide, removed in mature form; it reads PALPMAPAPPLLAAALALAYLLRPLA.

Belongs to the neuritin family.

It localises to the cell membrane. The sequence is that of Neuritin-like protein (NRN1L) from Homo sapiens (Human).